The chain runs to 137 residues: Nucleoside diphosphate kinase (137 aa).

ATP-binding residues include Lys9, Phe57, Arg85, Thr91, Arg102, and Asn112. His115 serves as the catalytic Pros-phosphohistidine intermediate.

Belongs to the NDK family. Homotetramer. Mg(2+) is required as a cofactor.

Its subcellular location is the cytoplasm. It carries out the reaction a 2'-deoxyribonucleoside 5'-diphosphate + ATP = a 2'-deoxyribonucleoside 5'-triphosphate + ADP. The enzyme catalyses a ribonucleoside 5'-diphosphate + ATP = a ribonucleoside 5'-triphosphate + ADP. Functionally, major role in the synthesis of nucleoside triphosphates other than ATP. The ATP gamma phosphate is transferred to the NDP beta phosphate via a ping-pong mechanism, using a phosphorylated active-site intermediate. This chain is Nucleoside diphosphate kinase, found in Campylobacter hominis (strain ATCC BAA-381 / DSM 21671 / CCUG 45161 / LMG 19568 / NCTC 13146 / CH001A).